The chain runs to 112 residues: ATP synthase subunit c (112 aa).

2 helical membrane-spanning segments follow: residues Phe36 to Met56 and Met81 to Ile101.

Belongs to the ATPase C chain family. As to quaternary structure, F-type ATPases have 2 components, F(1) - the catalytic core - and F(0) - the membrane proton channel. F(1) has five subunits: alpha(3), beta(3), gamma(1), delta(1), epsilon(1). F(0) has three main subunits: a(1), b(2) and c(10-14). The alpha and beta chains form an alternating ring which encloses part of the gamma chain. F(1) is attached to F(0) by a central stalk formed by the gamma and epsilon chains, while a peripheral stalk is formed by the delta and b chains.

The protein localises to the cell inner membrane. F(1)F(0) ATP synthase produces ATP from ADP in the presence of a proton or sodium gradient. F-type ATPases consist of two structural domains, F(1) containing the extramembraneous catalytic core and F(0) containing the membrane proton channel, linked together by a central stalk and a peripheral stalk. During catalysis, ATP synthesis in the catalytic domain of F(1) is coupled via a rotary mechanism of the central stalk subunits to proton translocation. The polypeptide is ATP synthase subunit c (Campylobacter jejuni subsp. jejuni serotype O:2 (strain ATCC 700819 / NCTC 11168)).